The sequence spans 348 residues: PDZ and LIM domain protein 2 (348 aa).

Residues 1 to 84 (MALTVDVVGP…PLRLQLDRPQ (84 aa)) enclose the PDZ domain. The disordered stretch occupies residues 67–139 (SKIRQSPSPL…PPTSPQAPTG (73 aa)). Positions 103 to 118 (RFQSSRRTHTDSQASL) are enriched in polar residues. Phosphoserine is present on residues Ser-117, Ser-119, and Ser-124. Phosphothreonine occurs at positions 128 and 132. A phosphoserine mark is found at Ser-133, Ser-153, Ser-191, Ser-197, Ser-198, Ser-202, Ser-209, and Ser-262. A disordered region spans residues 165–202 (GGRRGSRQASLSPAGDSAVLVLPPPPSPGARSSSSRLS). The span at 193–202 (GARSSSSRLS) shows a compositional bias: low complexity. The interval 249–275 (ERGGTPAYLPSSLSPQSSLPTSRALAS) is disordered. Low complexity predominate over residues 257–270 (LPSSLSPQSSLPTS). The 61-residue stretch at 280–340 (HTCEKCNTSI…EKHARQRYSA (61 aa)) folds into the LIM zinc-binding domain.

Interacts with alpha-actinins ACTN1 and ACTN4, FLNA and MYH9. Interacts (via LIM zinc-binding domain) with MKRN2.

It is found in the cytoplasm. The protein resides in the cytoskeleton. Probable adapter protein located at the actin cytoskeleton that promotes cell attachment. Necessary for the migratory capacity of epithelial cells. Overexpression enhances cell adhesion to collagen and fibronectin and suppresses anchorage independent growth. May contribute to tumor cell migratory capacity. The sequence is that of PDZ and LIM domain protein 2 (PDLIM2) from Bos taurus (Bovine).